Here is a 145-residue protein sequence, read N- to C-terminus: D-aminoacyl-tRNA deacylase (145 aa).

A Gly-cisPro motif, important for rejection of L-amino acids motif is present at residues 137 to 138 (GP).

It belongs to the DTD family. As to quaternary structure, homodimer.

Its subcellular location is the cytoplasm. It carries out the reaction glycyl-tRNA(Ala) + H2O = tRNA(Ala) + glycine + H(+). The catalysed reaction is a D-aminoacyl-tRNA + H2O = a tRNA + a D-alpha-amino acid + H(+). In terms of biological role, an aminoacyl-tRNA editing enzyme that deacylates mischarged D-aminoacyl-tRNAs. Also deacylates mischarged glycyl-tRNA(Ala), protecting cells against glycine mischarging by AlaRS. Acts via tRNA-based rather than protein-based catalysis; rejects L-amino acids rather than detecting D-amino acids in the active site. By recycling D-aminoacyl-tRNA to D-amino acids and free tRNA molecules, this enzyme counteracts the toxicity associated with the formation of D-aminoacyl-tRNA entities in vivo and helps enforce protein L-homochirality. The protein is D-aminoacyl-tRNA deacylase of Pseudomonas putida (strain W619).